A 280-amino-acid polypeptide reads, in one-letter code: SPX domain-containing protein 2 (280 aa).

The region spanning 1–162 (MKFGKSLSSQ…GSMIRLPFVQ (162 aa)) is the SPX domain. 2 disordered regions span residues 191–244 (PTNE…KSTV) and 257–280 (GSSTVSVFSLPPLHGSNGQDEPGR).

Interacts (via SPX domain) with PHR2 (via C-terminus). Interacts with RLI1 in the nucleus to prevents its positive regulation of leaf inclination during phosphate (Pi) starvation. In terms of tissue distribution, predominantly expressed in roots, leaves and seeds. Localized in leaves lamina joints.

The protein resides in the nucleus. Functionally, inhibits PHR2 DNA-binding activity via a phosphate (Pi)-dependent protein interaction. Together with SPX1, plays a negative role in the regulation of leaf inclination by preventing RLI1 transcription factor activity in Pi depleted conditions. The protein is SPX domain-containing protein 2 of Oryza sativa subsp. japonica (Rice).